The chain runs to 564 residues: 2-succinyl-5-enolpyruvyl-6-hydroxy-3-cyclohexene-1-carboxylate synthase (564 aa).

The protein belongs to the TPP enzyme family. MenD subfamily. As to quaternary structure, homodimer. Mg(2+) serves as cofactor. Mn(2+) is required as a cofactor. It depends on thiamine diphosphate as a cofactor.

It catalyses the reaction isochorismate + 2-oxoglutarate + H(+) = 5-enolpyruvoyl-6-hydroxy-2-succinyl-cyclohex-3-ene-1-carboxylate + CO2. The protein operates within quinol/quinone metabolism; 1,4-dihydroxy-2-naphthoate biosynthesis; 1,4-dihydroxy-2-naphthoate from chorismate: step 2/7. It functions in the pathway quinol/quinone metabolism; menaquinone biosynthesis. In terms of biological role, catalyzes the thiamine diphosphate-dependent decarboxylation of 2-oxoglutarate and the subsequent addition of the resulting succinic semialdehyde-thiamine pyrophosphate anion to isochorismate to yield 2-succinyl-5-enolpyruvyl-6-hydroxy-3-cyclohexene-1-carboxylate (SEPHCHC). The protein is 2-succinyl-5-enolpyruvyl-6-hydroxy-3-cyclohexene-1-carboxylate synthase of Vibrio vulnificus (strain YJ016).